A 1242-amino-acid chain; its full sequence is Structural polyprotein (1242 aa).

Residues 1–36 are necessary for nucleocapsid assembly and virus assembly; sequence MFPYPTLNYSPMAPVNPMAYRDPNPPRRRWRPFRPP. Residues 1 to 104 form a disordered region; the sequence is MFPYPTLNYS…KQKPGKRQRM (104 aa). Residues 37 to 70 form a host transcription inhibition region; that stretch reads LAAQIEDLRRSIANLTFKQRAPNPPAGPPAKRKK. The Supraphysiological nuclear export signal signature appears at 44 to 51; that stretch reads LRRSIANL. Residues 66–104 show a composition bias toward basic residues; it reads AKRKKPAPKPKPAAPKKKRQPPPAKKQKRKQKPGKRQRM. Positions 67 to 70 match the Nuclear localization signal motif; sequence KRKK. The interval 83–113 is binding to the viral RNA; sequence KRQPPPAKKQKRKQKPGKRQRMCMKLESDKT. The segment at 98–112 is ribosome-binding; sequence PGKRQRMCMKLESDK. Phosphoserine is present on serine 110. The Peptidase S3 domain maps to 112 to 261; sequence KTFPILLNGQ…KDTPEGSEPW (150 aa). Threonine 113 carries the phosphothreonine modification. Active-site charge relay system residues include histidine 138, aspartate 160, and serine 212. Residues 262–273 are functions as an uncleaved signal peptide for the precursor of protein E3/E2; it reads SLTTVMCVLANI. Asparagine 272 carries N-linked (GlcNAc...) asparagine; by host glycosylation. The Extracellular segment spans residues 325–688; the sequence is DLETHFTQYK…YYYNRYPMTT (364 aa). The chain crosses the membrane as a helical span at residues 689–709; the sequence is IVGLCTCAAIIMVSCITSVWL. At 710-744 the chain is on the cytoplasmic side; it reads LCRTRNLCITPYRLAPNAQVPILLAVLCCVKPTRA. Residues cysteine 717, cysteine 737, and cysteine 738 are each lipidated (S-palmitoyl cysteine; by host). A transient transmembrane before p62-6K protein processing region spans residues 717–737; the sequence is CITPYRLAPNAQVPILLAVLC. At 745–759 the chain is on the extracellular side; sequence DDTLQVLNYLWNNNQ. 2 helical membrane passes run 760–780 and 781–801; these read NFFW…MRML and RCLL…GAAA. The Extracellular portion of the chain corresponds to 802 to 1218; sequence YEHTAVMPNK…WSWLKVLVGS (417 aa). Disulfide bonds link cysteine 850/cysteine 915, cysteine 863/cysteine 895, cysteine 864/cysteine 897, cysteine 869/cysteine 879, cysteine 1061/cysteine 1073, cysteine 1103/cysteine 1178, cysteine 1108/cysteine 1182, and cysteine 1130/cysteine 1172. Residues 885–902 are E1 fusion peptide loop; sequence VYPFMWGGAYCFCDTENT. Residues 1219–1239 traverse the membrane as a helical segment; the sequence is TSAFIVLGLIATAVVALVLFT. Topologically, residues 1240 to 1242 are cytoplasmic; sequence HKH.

As to quaternary structure, part of a tetrameric complex composed of host CRM1, host importin alpha/beta dimer and the viral capsid; this complex blocks the receptor-mediated transport through the nuclear pore. Interacts with host phosphatase PPP1CA; this interaction dephosphorylates the capsid protein, which increases its ability to bind to the viral genome. Interacts with host karyopherin KPNA4; this interaction allows the nuclear import of the viral capsid protein. Interacts with spike glycoprotein E2. Interacts with host IRAK1; the interaction leads to inhibition of IRAK1-dependent signaling. In terms of assembly, the precursor of protein E3/E2 and E1 form a heterodimer shortly after synthesis. The precursor of protein E3/E2 and E1 form a heterodimer shortly after synthesis. Processing of the precursor of protein E3/E2 into E2 and E3 results in a heterodimer of the spike glycoproteins E2 and E1. Spike at virion surface are constituted of three E2-E1 heterodimers. After target cell attachment and endocytosis, E1 change conformation to form homotrimers. Interacts with 6K protein. As to quaternary structure, processing of the precursor of protein E3/E2 into E2 and E3 results in a heterodimer of the spike glycoproteins E2 and E1. Spike at virion surface are constituted of three E2-E1 heterodimers. Interacts with 6K protein. In terms of assembly, interacts with spike glycoprotein E1. Interacts with spike glycoprotein E2. Post-translationally, structural polyprotein: Specific enzymatic cleavages in vivo yield mature proteins. Capsid protein is auto-cleaved during polyprotein translation, unmasking a signal peptide at the N-terminus of the precursor of E3/E2. The remaining polyprotein is then targeted to the host endoplasmic reticulum, where host signal peptidase cleaves it into pE2, 6K and E1 proteins. pE2 is further processed to mature E3 and E2 by host furin in trans-Golgi vesicle. In terms of processing, phosphorylated on serine and threonine residues. Palmitoylated via thioester bonds. These palmitoylations may induce disruption of the C-terminus transmembrane. This would result in the reorientation of E2 C-terminus from lumenal to cytoplasmic side. Post-translationally, N-glycosylated. In terms of processing, palmitoylated via thioester bonds.

It localises to the virion. The protein localises to the host cytoplasm. The protein resides in the host cell membrane. It is found in the host nucleus. Its subcellular location is the virion membrane. It catalyses the reaction Autocatalytic release of the core protein from the N-terminus of the togavirus structural polyprotein by hydrolysis of a -Trp-|-Ser- bond.. Forms an icosahedral capsid with a T=4 symmetry composed of 240 copies of the capsid protein surrounded by a lipid membrane through which penetrate 80 spikes composed of trimers of E1-E2 heterodimers. The capsid protein binds to the viral RNA genome at a site adjacent to a ribosome binding site for viral genome translation following genome release. Possesses a protease activity that results in its autocatalytic cleavage from the nascent structural protein. Following its self-cleavage, the capsid protein transiently associates with ribosomes, and within several minutes the protein binds to viral RNA and rapidly assembles into icosahedric core particles. The resulting nucleocapsid eventually associates with the cytoplasmic domain of the spike glycoprotein E2 at the cell membrane, leading to budding and formation of mature virions. In case of infection, new virions attach to target cells and after clathrin-mediated endocytosis their membrane fuses with the host endosomal membrane. This leads to the release of the nucleocapsid into the cytoplasm, followed by an uncoating event necessary for the genomic RNA to become accessible. The uncoating might be triggered by the interaction of capsid proteins with ribosomes. Binding of ribosomes would release the genomic RNA since the same region is genomic RNA-binding and ribosome-binding. Specifically inhibits interleukin-1 receptor-associated kinase 1/IRAK1-dependent signaling during viral entry, representing a means by which the alphaviruses may evade innate immune detection and activation prior to viral gene expression. Inhibits host transcription. Forms a tetrameric complex with XPO1/CRM1 and the nuclear import receptor importin. This complex blocks the central channel of host nuclear pores thereby inhibiting the receptor-mediated nuclear transport and thus the host mRNA and rRNA transcription. The inhibition of transcription is linked to a cytopathic effect on the host cell. Functionally, provides the signal sequence for the translocation of the precursor of protein E3/E2 to the host endoplasmic reticulum. Furin-cleaved E3 remains associated with spike glycoprotein E1 and mediates pH protection of the latter during the transport via the secretory pathway. After virion release from the host cell, the assembly protein E3 is gradually released in the extracellular space. In terms of biological role, plays a role in viral attachment to target host cell, by binding to the cell receptor. Synthesized as a p62 precursor which is processed by furin at the cell membrane just before virion budding, giving rise to E2-E1 heterodimer. The p62-E1 heterodimer is stable, whereas E2-E1 is unstable and dissociate at low pH. p62 is processed at the last step, presumably to avoid E1 fusion activation before its final export to cell surface. E2 C-terminus contains a transitory transmembrane that would be disrupted by palmitoylation, resulting in reorientation of the C-terminal tail from lumenal to cytoplasmic side. This step is critical since E2 C-terminus is involved in budding by interacting with capsid proteins. This release of E2 C-terminus in cytoplasm occurs lately in protein export, and precludes premature assembly of particles at the endoplasmic reticulum membrane. Its function is as follows. Constitutive membrane protein involved in virus glycoprotein processing, cell permeabilization, and the budding of viral particles. Disrupts the calcium homeostasis of the cell, probably at the endoplasmic reticulum level. This leads to cytoplasmic calcium elevation. Because of its lipophilic properties, the 6K protein is postulated to influence the selection of lipids that interact with the transmembrane domains of the glycoproteins, which, in turn, affects the deformability of the bilayer required for the extreme curvature that occurs as budding proceeds. Present in low amount in virions, about 3% compared to viral glycoproteins. Class II viral fusion protein. Fusion activity is inactive as long as E1 is bound to E2 in mature virion. After virus attachment to target cell and endocytosis, acidification of the endosome would induce dissociation of E1/E2 heterodimer and concomitant trimerization of the E1 subunits. This E1 trimer is fusion active, and promotes release of viral nucleocapsid in cytoplasm after endosome and viral membrane fusion. Efficient fusion requires the presence of cholesterol and sphingolipid in the target membrane. Fusion is optimal at levels of about 1 molecule of cholesterol per 2 molecules of phospholipids, and is specific for sterols containing a 3-beta-hydroxyl group. In Aedes (Human), this protein is Structural polyprotein.